Consider the following 1019-residue polypeptide: Photoactivated adenylate cyclase subunit alpha (1019 aa).

Residues 55-148 (LRRLMYLSAS…GRMYGEWHMK (94 aa)) form the BLUF 1 domain. The region spanning 204–332 (VVTFIYLVEF…DCINTASRIT (129 aa)) is the Guanylate cyclase 1 domain. One can recognise a BLUF 2 domain in the interval 467–559 (LITLTYISQA…RVYGSPLDMT (93 aa)). The 130-residue stretch at 615-744 (VMLATDICSF…EVSARVMEVE (130 aa)) folds into the Guanylate cyclase 2 domain. The segment at 822–861 (GTNAPGRGAPAGGIPSSPKVRPPGRTNSVSSYTPDPNEAL) is disordered. A compositionally biased stretch (low complexity) spans 825–839 (APGRGAPAGGIPSSP). A compositionally biased stretch (polar residues) spans 846-855 (RTNSVSSYTP).

This sequence belongs to the adenylyl cyclase class-4/guanylyl cyclase family. Heterotetramer of two alpha and two beta subunits. FAD serves as cofactor.

The protein resides in the cell projection. Its subcellular location is the cilium. The protein localises to the flagellum. The enzyme catalyses ATP = 3',5'-cyclic AMP + diphosphate. Activity increased by up to 80-fold under blue light. Acts as a blue light photoreceptor for the step-up photophobic response. Mediates photoavoidance. The sequence is that of Photoactivated adenylate cyclase subunit alpha from Euglena gracilis.